The chain runs to 318 residues: Cytochrome f (318 aa).

A signal peptide spans M1–A34. The heme site is built by F35, C55, C58, and H59. A helical transmembrane segment spans residues V284 to K304.

This sequence belongs to the cytochrome f family. In terms of assembly, the 4 large subunits of the cytochrome b6-f complex are cytochrome b6, subunit IV (17 kDa polypeptide, petD), cytochrome f and the Rieske protein, while the 4 small subunits are PetG, PetL, PetM and PetN. The complex functions as a dimer. Requires heme as cofactor.

It is found in the plastid. The protein localises to the chloroplast thylakoid membrane. In terms of biological role, component of the cytochrome b6-f complex, which mediates electron transfer between photosystem II (PSII) and photosystem I (PSI), cyclic electron flow around PSI, and state transitions. This is Cytochrome f from Rhodomonas salina (Cryptomonas salina).